We begin with the raw amino-acid sequence, 244 residues long: Mannose-binding protein C (244 aa).

The signal sequence occupies residues 1–18 (MSIFTSFLLLCVVTVVYA). In terms of domain architecture, Collagen-like spans 38 to 96 (GLNGFPGKDGRDGAKGEKGEPGQGLRGLQGPPGKVGPTGPPGNPGLKGAVGPKGDRGDR). The interval 40–101 (NGFPGKDGRD…DRGDRAEFDT (62 aa)) is disordered. Position 43 is a 4-hydroxyproline (Pro-43). The segment covering 45–57 (KDGRDGAKGEKGE) has biased composition (basic and acidic residues). 4-hydroxyproline is present on residues Pro-58, Pro-69, Pro-78, and Pro-81. The segment covering 65–74 (LQGPPGKVGP) has biased composition (low complexity). Residues 90–99 (KGDRGDRAEF) are compositionally biased toward basic and acidic residues. Residues 108–126 (IAALRSELRALRNWVLFSL) adopt a coiled-coil conformation. Residues 129–241 (KVGKKYFVSS…CSDSFLAICE (113 aa)) form the C-type lectin domain. Intrachain disulfides connect Cys-151-Cys-240 and Cys-218-Cys-232. An N-linked (GlcNAc...) asparagine glycan is attached at Asn-210.

As to quaternary structure, oligomeric complex of 3 or more homotrimers. Interacts with MASP1 and MASP2. Interacts with MEP1A and MEP1B and may inhibit their catalytic activity. In terms of processing, hydroxylation on proline residues within the sequence motif, GXPG, is most likely to be 4-hydroxy as this fits the requirement for 4-hydroxylation in vertebrates.

Its subcellular location is the secreted. Its function is as follows. Calcium-dependent lectin involved in innate immune defense. Binds mannose, fucose and N-acetylglucosamine on different microorganisms and activates the lectin complement pathway. Binds to late apoptotic cells, as well as to apoptotic blebs and to necrotic cells, but not to early apoptotic cells, facilitating their uptake by macrophages. This is Mannose-binding protein C (Mbl2) from Mus musculus (Mouse).